The following is a 450-amino-acid chain: Saccharopine dehydrogenase [NADP(+), L-glutamate-forming] (450 aa).

NADP(+) contacts are provided by residues 11 to 14 (SGFV), 33 to 35 (CRT), 55 to 56 (DV), Ile-76, 98 to 99 (TS), 125 to 127 (LDP), and Ser-175. Residues 99–100 (SY) and Asp-126 contribute to the L-saccharopine site. L-saccharopine-binding positions include Arg-224 and 245–247 (TLR).

It belongs to the saccharopine dehydrogenase family. As to quaternary structure, homodimer.

It catalyses the reaction L-saccharopine + NADP(+) + H2O = (S)-2-amino-6-oxohexanoate + L-glutamate + NADPH + H(+). It participates in amino-acid biosynthesis; L-lysine biosynthesis via AAA pathway; L-lysine from L-alpha-aminoadipate (fungal route): step 2/3. The protein is Saccharopine dehydrogenase [NADP(+), L-glutamate-forming] (LYS3) of Pyricularia oryzae (strain 70-15 / ATCC MYA-4617 / FGSC 8958) (Rice blast fungus).